A 233-amino-acid chain; its full sequence is uncharacterized protein (233 aa).

3 helical membrane-spanning segments follow: residues 4–24, 35–55, and 66–86; these read LAILLSILAIGLILLIINHDT, FGQLVSLGAIATLIGAGILQS, and IAIWLFVVLALVSAYVYRFEL.

It is found in the cell membrane. This is an uncharacterized protein from Sinorhizobium sp.